Here is a 45-residue protein sequence, read N- to C-terminus: uncharacterized protein (45 aa).

This is an uncharacterized protein from Dictyostelium discoideum (Social amoeba).